Consider the following 209-residue polypeptide: Hyperpolarization-activated voltage-gated potassium channel (209 aa).

Topologically, residues 1-10 (MNLKDRRLKK) are cytoplasmic. Residues 11–31 (IMEVLSLIFTFEIVASFILST) traverse the membrane as a helical segment. The Extracellular portion of the chain corresponds to 32–38 (YNPPYQD). Residues 39-59 (LLIKLDYISIMFFTFEFIYNF) form a helical membrane-spanning segment. Topologically, residues 60-71 (YYVEDKAKFFKD) are cytoplasmic. A helical membrane pass occupies residues 72 to 92 (IYNIVDAIVVIAFLLYSLQVF). The Extracellular segment spans residues 93-96 (YSKA). Residues 97–117 (FLGLRVINLLRILVLLRIIKL) form a helical; Voltage-sensor membrane-spanning segment. Residues 118–125 (RKLEENQA) lie on the Cytoplasmic side of the membrane. Residues 126 to 146 (LINFLTLLTICFIASCLIWIV) form a helical membrane-spanning segment. The Extracellular portion of the chain corresponds to 147–181 (ESGVNPAINNFFDAFYFTTISITTVGYGDITPKTD). Residues 170-175 (TVGYGD) carry the Selectivity filter motif. A helical transmembrane segment spans residues 182–202 (AGKLIIIFSVLFFISGLITSL). Over 203-209 (QKALKGD) the chain is Cytoplasmic.

It belongs to the potassium channel family. Homotetramer.

Its subcellular location is the cell membrane. Voltage-gated potassium-selective channel opened by hyperpolarization. This Methanocaldococcus jannaschii (strain ATCC 43067 / DSM 2661 / JAL-1 / JCM 10045 / NBRC 100440) (Methanococcus jannaschii) protein is Hyperpolarization-activated voltage-gated potassium channel (mvp).